The primary structure comprises 354 residues: tRNase Z TRZ2, chloroplastic (354 aa).

Residues 1-21 are disordered; the sequence is MQLSSSFPISPPKIFPSTKHH. The transit peptide at 1-68 directs the protein to the chloroplast; that stretch reads MQLSSSFPIS…EEEEEYRKAR (68 aa).

This sequence belongs to the RNase Z family. Homodimer. The cofactor is Zn(2+). Ca(2+) is required as a cofactor. Mn(2+) serves as cofactor. Requires Mg(2+) as cofactor. In terms of tissue distribution, highly expressed in green and actively dividing tissues.

It localises to the plastid. The protein localises to the chloroplast. It catalyses the reaction Endonucleolytic cleavage of RNA, removing extra 3' nucleotides from tRNA precursor, generating 3' termini of tRNAs. A 3'-hydroxy group is left at the tRNA terminus and a 5'-phosphoryl group is left at the trailer molecule.. Zinc phosphodiesterase, which displays tRNA 3'-processing endonuclease activity. Involved in tRNA maturation, by removing a 3'-trailer from precursor tRNA. This chain is tRNase Z TRZ2, chloroplastic, found in Arabidopsis thaliana (Mouse-ear cress).